A 90-amino-acid chain; its full sequence is UPF0297 protein Cthe_0151 (90 aa).

This sequence belongs to the UPF0297 family.

The polypeptide is UPF0297 protein Cthe_0151 (Acetivibrio thermocellus (strain ATCC 27405 / DSM 1237 / JCM 9322 / NBRC 103400 / NCIMB 10682 / NRRL B-4536 / VPI 7372) (Clostridium thermocellum)).